We begin with the raw amino-acid sequence, 620 residues long: MALLQIAEPGQSAAPHQHRLAVGIDLGTTNSLVAAVRSGVTATLPDENGQHSLPSIVRYTQDGIEVGQVAALSSAQDPKNTIVSVKRFMGRSLTDIQSGEQIFPYQFEASENGLPLFVTPQGQVNPVQVSAEILRPLVERAEKTLGGELQGVVITVPAYFDDAQRQGTKDAASLLGVKVLRLLNEPTAAAIAYGLDSKQEGVIAIYDLGGGTFDISILRLNRGVFEVLATGGDSALGGDDFDHLLQAHMQQVWQLTNLDPQLSRQLLIEARRVKEALTDASEVEASLTLADGTVLKQVVTKAEFDNLISALVKKTIASCRRTLRDAGVTADEVLETVMVGGSTRVPLVREQVEAFFGKAPLTSIDPDRVVAIGAAIQADILVGNKPESELLLLDVIPLSLGIETMGGLVEKVVSRNTTIPVARAQEFTTFKDGQTAMAFHVVQGERELVDDCRSLARFTLKGIPPLAAGAAHIRVTFQVDADGLLSVTAMEKSTGVQSSIQVKPSFGLSDTEIATMLKDSMKHAKEDISRRMLAEQQVEAARVLESLNAALAKDGDLLTSDERQQIDAVMAKLAEIARGDDADAIKQAIEVLDEHTQDFAAKRMDNSIRVAFKGQSIDNI.

It belongs to the heat shock protein 70 family.

Chaperone involved in the maturation of iron-sulfur cluster-containing proteins. Has a low intrinsic ATPase activity which is markedly stimulated by HscB. This is Chaperone protein HscA homolog from Shewanella sp. (strain MR-7).